The sequence spans 100 residues: C-X-C motif chemokine 2 (100 aa).

The signal sequence occupies residues 1–31; that stretch reads MAPPTRQLLNAVLVLLLLLATNHQGTGVVVA. Disulfide bonds link Cys-36/Cys-62 and Cys-38/Cys-78.

The protein belongs to the intercrine alpha (chemokine CxC) family. As to quaternary structure, homotetramer. As to expression, at least expressed in the lung and trachea.

It is found in the secreted. Its function is as follows. Chemotactic for human polymorphonuclear leukocytes but does not induce chemokinesis or an oxidative burst. Contributes to neutrophil activation during inflammation. This Rattus norvegicus (Rat) protein is C-X-C motif chemokine 2 (Cxcl2).